The chain runs to 280 residues: 3,2-trans-enoyl-CoA isomerase (280 aa).

Residues 68 to 72 (SGADF) and Leu-126 each bind substrate. The Proton donor/acceptor role is filled by Glu-158. The Microbody targeting signal signature appears at 278–280 (HRL).

It belongs to the enoyl-CoA hydratase/isomerase family. Homohexamer, dimer of trimers. Interacts with DCI1.

The protein localises to the peroxisome. It catalyses the reaction a (3Z)-enoyl-CoA = a 4-saturated (2E)-enoyl-CoA. The enzyme catalyses a (3E)-enoyl-CoA = a 4-saturated (2E)-enoyl-CoA. It functions in the pathway lipid metabolism; fatty acid beta-oxidation. Essential for the beta oxidation of unsaturated fatty acids. This is 3,2-trans-enoyl-CoA isomerase (ECI1) from Saccharomyces cerevisiae (strain ATCC 204508 / S288c) (Baker's yeast).